Reading from the N-terminus, the 451-residue chain is Adenylyltransferase and sulfurtransferase MOCS3-1 (451 aa).

Residues 42-62 (GEDSDEAEESSNDMPTPQTKL) are disordered. Acidic residues predominate over residues 43–52 (EDSDEAEESS). Thr60 carries the phosphothreonine modification. ATP contacts are provided by residues Gly99, Asp120, 127-131 (SNLHR), Lys144, and 188-189 (DN). Positions 229 and 232 each coordinate Zn(2+). Cys246 (glycyl thioester intermediate; for adenylyltransferase activity) is an active-site residue. Positions 304 and 307 each coordinate Zn(2+). Residues 353–449 (QSQPHLLLDV…WTGSVDATFP (97 aa)) form the Rhodanese domain. Cys408 functions as the Cysteine persulfide intermediate; for sulfurtransferase activity in the catalytic mechanism.

The protein in the N-terminal section; belongs to the HesA/MoeB/ThiF family. UBA4 subfamily. Requires Zn(2+) as cofactor.

It is found in the cytoplasm. The enzyme catalyses [molybdopterin-synthase sulfur-carrier protein]-C-terminal Gly-Gly + ATP + H(+) = [molybdopterin-synthase sulfur-carrier protein]-C-terminal Gly-Gly-AMP + diphosphate. It carries out the reaction [molybdopterin-synthase sulfur-carrier protein]-C-terminal Gly-Gly-AMP + S-sulfanyl-L-cysteinyl-[cysteine desulfurase] + AH2 = [molybdopterin-synthase sulfur-carrier protein]-C-terminal-Gly-aminoethanethioate + L-cysteinyl-[cysteine desulfurase] + A + AMP + 2 H(+). It participates in tRNA modification; 5-methoxycarbonylmethyl-2-thiouridine-tRNA biosynthesis. It functions in the pathway cofactor biosynthesis; molybdopterin biosynthesis. Functionally, plays a central role in 2-thiolation of mcm(5)S(2)U at tRNA wobble positions of cytosolic tRNA(Lys), tRNA(Glu) and tRNA(Gln). Also essential during biosynthesis of the molybdenum cofactor. Acts by mediating the C-terminal thiocarboxylation of sulfur carriers URM1 and MOCS2A. Its N-terminus first activates URM1 and MOCS2A as acyl-adenylates (-COAMP), then the persulfide sulfur on the catalytic cysteine is transferred to URM1 and MOCS2A to form thiocarboxylation (-COSH) of their C-terminus. The reaction probably involves hydrogen sulfide that is generated from the persulfide intermediate and that acts as a nucleophile towards URM1 and MOCS2A. Subsequently, a transient disulfide bond is formed. Does not use thiosulfate as sulfur donor; NFS1 probably acting as a sulfur donor for thiocarboxylation reactions. This Drosophila pseudoobscura pseudoobscura (Fruit fly) protein is Adenylyltransferase and sulfurtransferase MOCS3-1.